The chain runs to 457 residues: Multidrug resistance protein MdtK (457 aa).

The Cytoplasmic portion of the chain corresponds to M1–L10. A helical transmembrane segment spans residues L11–V31. Over D32 to S52 the chain is Periplasmic. Residues I53 to A73 traverse the membrane as a helical segment. The Cytoplasmic segment spans residues Q74–F92. Residues W93 to I113 traverse the membrane as a helical segment. Over R114 to K126 the chain is Periplasmic. Residues A127–A147 traverse the membrane as a helical segment. Topologically, residues R148–P159 are cytoplasmic. Residues G160–Y180 form a helical membrane-spanning segment. Residues G181–L188 lie on the Periplasmic side of the membrane. A helical membrane pass occupies residues G189–V209. Residues S210–G242 lie on the Cytoplasmic side of the membrane. The helical transmembrane segment at L243–V263 threads the bilayer. Over S264 to Q275 the chain is Periplasmic. A helical transmembrane segment spans residues I276 to T296. The Cytoplasmic portion of the chain corresponds to I297–T313. Residues A314–V334 form a helical membrane-spanning segment. At S335 to E349 the chain is on the periplasmic side. Residues V350–I370 form a helical membrane-spanning segment. Residues Q371–S386 lie on the Cytoplasmic side of the membrane. The helical transmembrane segment at I387–A407 threads the bilayer. At L408–G417 the chain is on the periplasmic side. A helical transmembrane segment spans residues P418–L438. Over R439 to R457 the chain is Cytoplasmic.

Belongs to the multi antimicrobial extrusion (MATE) (TC 2.A.66.1) family. MdtK subfamily.

It localises to the cell inner membrane. Functionally, multidrug efflux pump that functions probably as a Na(+)/drug antiporter. In Shigella flexneri serotype 5b (strain 8401), this protein is Multidrug resistance protein MdtK.